The chain runs to 119 residues: 5-hydroxyisourate hydrolase (119 aa).

3 residues coordinate substrate: H10, R48, and Y116.

Belongs to the transthyretin family. 5-hydroxyisourate hydrolase subfamily. As to quaternary structure, homotetramer.

The catalysed reaction is 5-hydroxyisourate + H2O = 5-hydroxy-2-oxo-4-ureido-2,5-dihydro-1H-imidazole-5-carboxylate + H(+). It functions in the pathway purine metabolism; urate degradation; (S)-allantoin from urate: step 2/3. Catalyzes the hydrolysis of 5-hydroxyisourate (HIU) to 2-oxo-4-hydroxy-4-carboxy-5-ureidoimidazoline (OHCU). The protein is 5-hydroxyisourate hydrolase of Deinococcus radiodurans (strain ATCC 13939 / DSM 20539 / JCM 16871 / CCUG 27074 / LMG 4051 / NBRC 15346 / NCIMB 9279 / VKM B-1422 / R1).